The following is a 158-amino-acid chain: Endoribonuclease YbeY (158 aa).

Residues histidine 120, histidine 124, and histidine 130 each coordinate Zn(2+).

This sequence belongs to the endoribonuclease YbeY family. Zn(2+) is required as a cofactor.

It localises to the cytoplasm. In terms of biological role, single strand-specific metallo-endoribonuclease involved in late-stage 70S ribosome quality control and in maturation of the 3' terminus of the 16S rRNA. This Spiroplasma citri protein is Endoribonuclease YbeY.